The chain runs to 221 residues: Secreted protein BARF1 (221 aa).

Positions Met1–Ala20 are cleaved as a signal peptide. Ig-like domains follow at residues Val21–Ser120 and Pro124–Ser220. The N-linked (GlcNAc...) asparagine; by host glycan is linked to Asn95. Cys146 and Cys201 are oxidised to a cystine.

As to quaternary structure, homohexamer. Interacts with human CSF1. Phosphorylated on serine and threonine by host.

The protein localises to the secreted. Its function is as follows. Plays diverse functions in immunomodulation and oncogenicity, maybe by acting as a functional receptor for human CSF1. May inhibit interferon secretion from mononuclear cells. Exhibits oncogenic activity in vitro. The protein is Secreted protein BARF1 of Epstein-Barr virus (strain B95-8) (HHV-4).